The sequence spans 326 residues: Membrane-associated kinase regulator 5 (326 aa).

Disordered regions lie at residues 188–239 (TKKQ…GMSP) and 267–326 (GSRE…KISD). Low complexity-rich tracts occupy residues 190–202 (KQSS…PTSS) and 270–305 (ESSL…SSDS).

Expressed in roots.

It localises to the cell membrane. The protein resides in the cytoplasm. Its subcellular location is the cytosol. Its function is as follows. Positive effector of CLE45 peptide signaling. Post-transcriptionally regulated amplifier of the CLE45 peptide signal that acts downstream of BAM3 in the regulation of the transition of root protophloem cells from proliferation to differentiation; thus preventing primary root elongation but stimulating lateral roots development. This Arabidopsis thaliana (Mouse-ear cress) protein is Membrane-associated kinase regulator 5.